Reading from the N-terminus, the 330-residue chain is Apolipoprotein E (330 aa).

The N-terminal stretch at 1–18 (MKVLWAALVVALLAGCWA) is a signal peptide. Positions 21-43 (EPESPLQGKPEPELEPELEPKRE) are disordered. 7 repeat units span residues 96-117 (TLME…EQLG), 118-139 (PMAS…ARLR), 140-161 (SDME…AMLG), 162-183 (QSTE…KRVL), 184-205 (RDAE…EGAE), 206-227 (RSVS…TRHA), and 247-268 (GRLE…EQME). A 7 X 22 AA approximate tandem repeats region spans residues 96 to 268 (TLMEETMKEI…HLDEVREQME (173 aa)). M159 is modified (methionine sulfoxide). S163 carries the phosphoserine modification. Residues 174–184 (HMRKLRKRVLR) are LDL and other lipoprotein receptors binding. Position 178–181 (178–181 (LRKR)) interacts with heparin. A lipid-binding and lipoprotein association region spans residues 226–303 (HANLATQPLR…SWFEPLVEDM (78 aa)). Position 242–249 (242–249 (GQQLRGRL)) interacts with heparin. The segment at 279–330 (NQMRQQVEAFQARLKSWFEPLVEDMQRQWAGLVEKVQVAVGTSPTTPPLETK) is homooligomerization. A specificity for association with VLDL region spans residues 291–303 (RLKSWFEPLVEDM).

Belongs to the apolipoprotein A1/A4/E family. As to quaternary structure, homotetramer. May interact with ABCA1; functionally associated with ABCA1 in the biogenesis of HDLs. May interact with APP/A4 amyloid-beta peptide; the interaction is extremely stable in vitro but its physiological significance is unclear. May interact with MAPT. May interact with MAP2. In the cerebrospinal fluid, interacts with secreted SORL1. Interacts with PMEL; this allows the loading of PMEL luminal fragment on ILVs to induce fibril nucleation. In terms of processing, APOE exists as multiple glycosylated and sialylated glycoforms within cells and in plasma. The extent of glycosylation and sialylation are tissue and context specific. Glycated in plasma VLDL. Post-translationally, phosphorylated by FAM20C in the extracellular medium.

The protein localises to the secreted. Its subcellular location is the extracellular space. The protein resides in the extracellular matrix. It localises to the extracellular vesicle. It is found in the endosome. The protein localises to the multivesicular body. Functionally, APOE is an apolipoprotein, a protein associating with lipid particles, that mainly functions in lipoprotein-mediated lipid transport between organs via the plasma and interstitial fluids. APOE is a core component of plasma lipoproteins and is involved in their production, conversion and clearance. Apolipoproteins are amphipathic molecules that interact both with lipids of the lipoprotein particle core and the aqueous environment of the plasma. As such, APOE associates with chylomicrons, chylomicron remnants, very low density lipoproteins (VLDL) and intermediate density lipoproteins (IDL) but shows a preferential binding to high-density lipoproteins (HDL). It also binds a wide range of cellular receptors including the LDL receptor/LDLR, the LDL receptor-related proteins LRP1, LRP2 and LRP8 and the very low-density lipoprotein receptor/VLDLR that mediate the cellular uptake of the APOE-containing lipoprotein particles. Finally, APOE also has a heparin-binding activity and binds heparan-sulfate proteoglycans on the surface of cells, a property that supports the capture and the receptor-mediated uptake of APOE-containing lipoproteins by cells. A main function of APOE is to mediate lipoprotein clearance through the uptake of chylomicrons, VLDLs, and HDLs by hepatocytes. APOE is also involved in the biosynthesis by the liver of VLDLs as well as their uptake by peripheral tissues ensuring the delivery of triglycerides and energy storage in muscle, heart and adipose tissues. By participating in the lipoprotein-mediated distribution of lipids among tissues, APOE plays a critical role in plasma and tissues lipid homeostasis. APOE is also involved in two steps of reverse cholesterol transport, the HDLs-mediated transport of cholesterol from peripheral tissues to the liver, and thereby plays an important role in cholesterol homeostasis. First, it is functionally associated with ABCA1 in the biogenesis of HDLs in tissues. Second, it is enriched in circulating HDLs and mediates their uptake by hepatocytes. APOE also plays an important role in lipid transport in the central nervous system, regulating neuron survival and sprouting. The chain is Apolipoprotein E (APOE) from Neomonachus schauinslandi (Hawaiian monk seal).